The sequence spans 254 residues: Dihydroorotate dehydrogenase B (NAD(+)), electron transfer subunit (254 aa).

The FAD-binding FR-type domain occupies 1 to 99 (MLQTEMKVIQ…LGPLGKGFDI (99 aa)). Residues 50 to 53 (RPIS), 67 to 69 (LYR), and 74 to 75 (GT) contribute to the FAD site. Cys218, Cys223, Cys226, and Cys241 together coordinate [2Fe-2S] cluster.

This sequence belongs to the PyrK family. As to quaternary structure, heterotetramer of 2 PyrK and 2 PyrD type B subunits. [2Fe-2S] cluster is required as a cofactor. FAD serves as cofactor.

It functions in the pathway pyrimidine metabolism; UMP biosynthesis via de novo pathway; orotate from (S)-dihydroorotate (NAD(+) route): step 1/1. Functionally, responsible for channeling the electrons from the oxidation of dihydroorotate from the FMN redox center in the PyrD type B subunit to the ultimate electron acceptor NAD(+). This is Dihydroorotate dehydrogenase B (NAD(+)), electron transfer subunit from Listeria welshimeri serovar 6b (strain ATCC 35897 / DSM 20650 / CCUG 15529 / CIP 8149 / NCTC 11857 / SLCC 5334 / V8).